Here is a 535-residue protein sequence, read N- to C-terminus: Light-independent protochlorophyllide reductase subunit B (535 aa).

A [4Fe-4S] cluster-binding site is contributed by Asp-36. Asp-287 functions as the Proton donor in the catalytic mechanism. 422–423 (GL) contacts substrate.

This sequence belongs to the ChlB/BchB/BchZ family. As to quaternary structure, protochlorophyllide reductase is composed of three subunits; BchL, BchN and BchB. Forms a heterotetramer of two BchB and two BchN subunits. Requires [4Fe-4S] cluster as cofactor.

It catalyses the reaction chlorophyllide a + oxidized 2[4Fe-4S]-[ferredoxin] + 2 ADP + 2 phosphate = protochlorophyllide a + reduced 2[4Fe-4S]-[ferredoxin] + 2 ATP + 2 H2O. It participates in porphyrin-containing compound metabolism; bacteriochlorophyll biosynthesis (light-independent). Its function is as follows. Component of the dark-operative protochlorophyllide reductase (DPOR) that uses Mg-ATP and reduced ferredoxin to reduce ring D of protochlorophyllide (Pchlide) to form chlorophyllide a (Chlide). This reaction is light-independent. The NB-protein (BchN-BchB) is the catalytic component of the complex. The protein is Light-independent protochlorophyllide reductase subunit B of Rhodopseudomonas palustris (strain BisB5).